The primary structure comprises 591 residues: V-type ATP synthase alpha chain (591 aa).

Residue 242-249 (GPFGAGKT) coordinates ATP.

Belongs to the ATPase alpha/beta chains family.

It carries out the reaction ATP + H2O + 4 H(+)(in) = ADP + phosphate + 5 H(+)(out). In terms of biological role, produces ATP from ADP in the presence of a proton gradient across the membrane. The V-type alpha chain is a catalytic subunit. The chain is V-type ATP synthase alpha chain from Chlamydia abortus (strain DSM 27085 / S26/3) (Chlamydophila abortus).